The chain runs to 378 residues: Ribosomal RNA large subunit methyltransferase G (378 aa).

It belongs to the methyltransferase superfamily. RlmG family.

It localises to the cytoplasm. It carries out the reaction guanosine(1835) in 23S rRNA + S-adenosyl-L-methionine = N(2)-methylguanosine(1835) in 23S rRNA + S-adenosyl-L-homocysteine + H(+). Functionally, specifically methylates the guanine in position 1835 (m2G1835) of 23S rRNA. The protein is Ribosomal RNA large subunit methyltransferase G of Enterobacter sp. (strain 638).